The sequence spans 402 residues: 4-hydroxy-3-methylbut-2-enyl diphosphate reductase (402 aa).

Cys-66 provides a ligand contact to [4Fe-4S] cluster. (2E)-4-hydroxy-3-methylbut-2-enyl diphosphate is bound at residue His-96. Residue His-96 participates in dimethylallyl diphosphate binding. His-96 serves as a coordination point for isopentenyl diphosphate. Cys-157 contributes to the [4Fe-4S] cluster binding site. Residue His-185 participates in (2E)-4-hydroxy-3-methylbut-2-enyl diphosphate binding. Position 185 (His-185) interacts with dimethylallyl diphosphate. His-185 provides a ligand contact to isopentenyl diphosphate. The active-site Proton donor is the Glu-187. A (2E)-4-hydroxy-3-methylbut-2-enyl diphosphate-binding site is contributed by Thr-250. Cys-288 contacts [4Fe-4S] cluster. (2E)-4-hydroxy-3-methylbut-2-enyl diphosphate-binding residues include Ser-317, Ser-318, Asn-319, and Ser-379. Dimethylallyl diphosphate is bound by residues Ser-317, Ser-318, Asn-319, and Ser-379. 4 residues coordinate isopentenyl diphosphate: Ser-317, Ser-318, Asn-319, and Ser-379.

Belongs to the IspH family. The cofactor is [4Fe-4S] cluster.

The enzyme catalyses isopentenyl diphosphate + 2 oxidized [2Fe-2S]-[ferredoxin] + H2O = (2E)-4-hydroxy-3-methylbut-2-enyl diphosphate + 2 reduced [2Fe-2S]-[ferredoxin] + 2 H(+). It carries out the reaction dimethylallyl diphosphate + 2 oxidized [2Fe-2S]-[ferredoxin] + H2O = (2E)-4-hydroxy-3-methylbut-2-enyl diphosphate + 2 reduced [2Fe-2S]-[ferredoxin] + 2 H(+). It functions in the pathway isoprenoid biosynthesis; dimethylallyl diphosphate biosynthesis; dimethylallyl diphosphate from (2E)-4-hydroxy-3-methylbutenyl diphosphate: step 1/1. The protein operates within isoprenoid biosynthesis; isopentenyl diphosphate biosynthesis via DXP pathway; isopentenyl diphosphate from 1-deoxy-D-xylulose 5-phosphate: step 6/6. In terms of biological role, catalyzes the conversion of 1-hydroxy-2-methyl-2-(E)-butenyl 4-diphosphate (HMBPP) into a mixture of isopentenyl diphosphate (IPP) and dimethylallyl diphosphate (DMAPP). Acts in the terminal step of the DOXP/MEP pathway for isoprenoid precursor biosynthesis. The protein is 4-hydroxy-3-methylbut-2-enyl diphosphate reductase of Crocosphaera subtropica (strain ATCC 51142 / BH68) (Cyanothece sp. (strain ATCC 51142)).